Here is a 176-residue protein sequence, read N- to C-terminus: Oleosin Ara h 14.0103 (176 aa).

A2 carries the N-acetylalanine; alternate modification. The next 3 membrane-spanning stretches (helical) occupy residues 50–70 (IIAV…SGLS), 75–95 (IIGL…IVPA), and 96–116 (VVTI…GLTG). The segment at 156 to 176 (KTKDAGQEIQTKAQDVKRSSS) is disordered.

It belongs to the oleosin family. In terms of tissue distribution, expressed in seeds (at protein level).

It localises to the lipid droplet. Its subcellular location is the membrane. In terms of biological role, may have a structural role to stabilize the lipid body during desiccation of the seed by preventing coalescence of the oil. Probably interacts with both lipid and phospholipid moieties of lipid bodies. May also provide recognition signals for specific lipase anchorage in lipolysis during seedling growth. The protein is Oleosin Ara h 14.0103 of Arachis hypogaea (Peanut).